Reading from the N-terminus, the 396-residue chain is E3 ubiquitin-protein transferase MAEA (396 aa).

Positions 1–124 (MAVQESAAQL…AAASMWKRKR (124 aa)) are extracellular and involved in cell to cell contact. Thr28 carries the post-translational modification Phosphothreonine. A LisH domain is found at 121 to 153 (KRKRMDRMMVEHLLRCGYYNTAVKLARQSGIED). The 58-residue stretch at 159 to 216 (MFLTAKEVEESLERRETATCLAWCHDNKSRLRKMKSCLEFSLRIQEFIELVRQNKRLD) folds into the CTLH domain. The RING-Gid-type zinc-finger motif lies at 314 to 381 (CPVCSRSLNK…QDDKVVCPRT (68 aa)).

Identified in the CTLH complex that contains GID4, RANBP9 and/or RANBP10, MKLN1, MAEA, RMND5A (or alternatively its paralog RMND5B), GID8, ARMC8, WDR26 and YPEL5. Within this complex, MAEA, RMND5A (or alternatively its paralog RMND5B), GID8, WDR26, and RANBP9 and/or RANBP10 form the catalytic core, while GID4, MKLN1, ARMC8 and YPEL5 have ancillary roles. Interacts with F-actin. Autoubiquitinated as component of the CTLH E3 ubiquitin-protein ligase complex (in vitro). In terms of tissue distribution, detected in embryonic fibroblasts. Detected in macrophages. Detected in heart. liver, spleen and kidney (at protein level).

It is found in the cytoplasm. Its subcellular location is the nucleus. The protein resides in the nucleoplasm. It localises to the nucleus matrix. The protein localises to the cell membrane. It is found in the cytoskeleton. It catalyses the reaction S-ubiquitinyl-[E2 ubiquitin-conjugating enzyme]-L-cysteine + [acceptor protein]-L-lysine = [E2 ubiquitin-conjugating enzyme]-L-cysteine + N(6)-ubiquitinyl-[acceptor protein]-L-lysine.. In terms of biological role, core component of the CTLH E3 ubiquitin-protein ligase complex that selectively accepts ubiquitin from UBE2H and mediates ubiquitination and subsequent proteasomal degradation of the transcription factor HBP1. MAEA and RMND5A are both required for catalytic activity of the CTLH E3 ubiquitin-protein ligase complex. MAEA is required for normal cell proliferation. The CTLH E3 ubiquitin-protein ligase complex is not required for the degradation of enzymes involved in gluconeogenesis, such as FBP1. Plays a role in erythroblast enucleation during erythrocyte maturation and in the development of mature macrophages. Mediates the attachment of erythroid cell to mature macrophages; this MAEA-mediated contact inhibits erythroid cell apoptosis. Participates in erythroblastic island formation, which is the functional unit of definitive erythropoiesis. Associates with F-actin to regulate actin distribution in erythroblasts and macrophages. May contribute to nuclear architecture and cells division events. The protein is E3 ubiquitin-protein transferase MAEA (Maea) of Mus musculus (Mouse).